The sequence spans 723 residues: BBSome complex assembly protein BBS10 (723 aa).

The protein belongs to the TCP-1 chaperonin family. Component of a complex composed at least of MKKS, BBS10, BBS12, TCP1, CCT2, CCT3, CCT4, CCT5 and CCT8.

It is found in the cell projection. Its subcellular location is the cilium. Probable molecular chaperone that assists the folding of proteins upon ATP hydrolysis. Plays a role in the assembly of BBSome, a complex involved in ciliogenesis regulating transports vesicles to the cilia. Involved in adipogenic differentiation. The polypeptide is BBSome complex assembly protein BBS10 (BBS10) (Homo sapiens (Human)).